Reading from the N-terminus, the 405-residue chain is MKILIINTGSSSLKFAIYQYENSKKLISGVIEKIKEQKSIIKIINTDGSITERFEKGIENHPKAIEKMFKILLNSNSKILKNISEIKIIGHRVVHGGSYFKNSVILKNSNLDKLKQSSKLAPLHNPSAIAAIETVLKILPHAKQVLCFDTSWHQTIKKHAFLYATPYSWYKEHNIRKYGFHGLSYSYVTKRSSEILNKKIDNLNLIILHLGNGASINAVKDGKSYDTSMGITPLEGLVMGTRSGDIDPSIINLMSTILNKNTKQIEEILNKESGILGISEKSNDMRDIWNKIEEGEYQSKLAVEIMTYRVKKYIGSYIAILDFNVDAIVFTGGIGVVDYEVRELALKGFEKIGIELDLEKNKMAQNKNLESEISTIKSKVKILAIPTNEESTILEDIYNLIPKNL.

N7 lines the Mg(2+) pocket. Residue K14 coordinates ATP. R92 is a substrate binding site. Catalysis depends on D149, which acts as the Proton donor/acceptor. ATP-binding positions include 209 to 213 and 284 to 286; these read HLGNG and DMR. E389 lines the Mg(2+) pocket.

The protein belongs to the acetokinase family. In terms of assembly, homodimer. It depends on Mg(2+) as a cofactor. Mn(2+) is required as a cofactor.

It localises to the cytoplasm. The enzyme catalyses acetate + ATP = acetyl phosphate + ADP. Its pathway is metabolic intermediate biosynthesis; acetyl-CoA biosynthesis; acetyl-CoA from acetate: step 1/2. In terms of biological role, catalyzes the formation of acetyl phosphate from acetate and ATP. Can also catalyze the reverse reaction. This is Acetate kinase from Borrelia garinii subsp. bavariensis (strain ATCC BAA-2496 / DSM 23469 / PBi) (Borreliella bavariensis).